The sequence spans 279 residues: Bifunctional protein FolD 1 (279 aa).

Residues 166–168 and Ser-191 each bind NADP(+); that span reads GRS.

The protein belongs to the tetrahydrofolate dehydrogenase/cyclohydrolase family. As to quaternary structure, homodimer.

It carries out the reaction (6R)-5,10-methylene-5,6,7,8-tetrahydrofolate + NADP(+) = (6R)-5,10-methenyltetrahydrofolate + NADPH. The catalysed reaction is (6R)-5,10-methenyltetrahydrofolate + H2O = (6R)-10-formyltetrahydrofolate + H(+). It participates in one-carbon metabolism; tetrahydrofolate interconversion. Catalyzes the oxidation of 5,10-methylenetetrahydrofolate to 5,10-methenyltetrahydrofolate and then the hydrolysis of 5,10-methenyltetrahydrofolate to 10-formyltetrahydrofolate. This Salinispora arenicola (strain CNS-205) protein is Bifunctional protein FolD 1.